Reading from the N-terminus, the 151-residue chain is Deoxyuridine 5'-triphosphate nucleotidohydrolase (151 aa).

Residues 70–72 (RSG), Asn-83, 87–89 (LID), and Met-97 each bind substrate.

This sequence belongs to the dUTPase family. Homotrimer. Mg(2+) serves as cofactor.

The catalysed reaction is dUTP + H2O = dUMP + diphosphate + H(+). Its pathway is pyrimidine metabolism; dUMP biosynthesis; dUMP from dCTP (dUTP route): step 2/2. In terms of biological role, this enzyme is involved in nucleotide metabolism: it produces dUMP, the immediate precursor of thymidine nucleotides and it decreases the intracellular concentration of dUTP so that uracil cannot be incorporated into DNA. The sequence is that of Deoxyuridine 5'-triphosphate nucleotidohydrolase from Escherichia coli O45:K1 (strain S88 / ExPEC).